A 305-amino-acid polypeptide reads, in one-letter code: Putative S-adenosyl-L-methionine-dependent methyltransferase Mvan_1344 (305 aa).

S-adenosyl-L-methionine-binding positions include Asp130 and 159-160 (DL).

The protein belongs to the UPF0677 family.

Its function is as follows. Exhibits S-adenosyl-L-methionine-dependent methyltransferase activity. This chain is Putative S-adenosyl-L-methionine-dependent methyltransferase Mvan_1344, found in Mycolicibacterium vanbaalenii (strain DSM 7251 / JCM 13017 / BCRC 16820 / KCTC 9966 / NRRL B-24157 / PYR-1) (Mycobacterium vanbaalenii).